The chain runs to 356 residues: Protein ATP1B4 (356 aa).

At 1–109 the chain is on the nuclear side; the sequence is MRRQLRSRRA…SLARTGQSRS (109 aa). The tract at residues 26–78 is disordered; that stretch reads EANHNYLADEEEEAEEEAQVMMVPGLEEEEEEEEGKEEEEEREEEEGQGQSTG. Composition is skewed to acidic residues over residues 33-43 and 51-72; these read ADEEEEAEEEA and LEEE…EEEG. Residues 110–130 form a helical; Signal-anchor for type II membrane protein membrane-spanning segment; that stretch reads LILVIYFFFYASLAAVITLFI. At 131–356 the chain is on the perinuclear space side; it reads YMLFLAISPY…RIIFTLNIET (226 aa).

It belongs to the X(+)/potassium ATPases subunit beta family. Associates with a SMAD7-transcriptional complex. Interacts with TOR1AIP1. Does not associate with known Na,K-ATPase alpha-subunits. Interacts with SNW1. In terms of tissue distribution, expressed in skeletal muscle (at protein level). Expressed during postnatal development in skeletal muscle and heart.

The protein localises to the nucleus inner membrane. Its function is as follows. May act as a transcriptional coregulator during muscle development through its interaction with SNW1. Has lost its ancestral function as a Na,K-ATPase beta-subunit. The polypeptide is Protein ATP1B4 (Atp1b4) (Mus musculus (Mouse)).